The following is a 275-amino-acid chain: Small ribosomal subunit protein uS2 (275 aa).

Residues R244–E275 form a disordered region. A compositionally biased stretch (basic residues) spans K252–A261. A compositionally biased stretch (low complexity) spans P262 to E275.

This sequence belongs to the universal ribosomal protein uS2 family.

This chain is Small ribosomal subunit protein uS2, found in Thioalkalivibrio sulfidiphilus (strain HL-EbGR7).